Reading from the N-terminus, the 695-residue chain is Glycine--tRNA ligase beta subunit (695 aa).

Belongs to the class-II aminoacyl-tRNA synthetase family. In terms of assembly, tetramer of two alpha and two beta subunits.

The protein resides in the cytoplasm. It carries out the reaction tRNA(Gly) + glycine + ATP = glycyl-tRNA(Gly) + AMP + diphosphate. The protein is Glycine--tRNA ligase beta subunit of Lawsonia intracellularis (strain PHE/MN1-00).